The primary structure comprises 401 residues: Probable aspartic-type endopeptidase TRV_05382 (401 aa).

A signal peptide spans 1 to 22; it reads MWHSPFFTAFTLFLGFFTLTLA. Residues Asn80 and Asn102 are each glycosylated (N-linked (GlcNAc...) asparagine). Residues 94 to 398 form the Peptidase A1 domain; that stretch reads FVNEITIGNN…DHDGPKMGFA (305 aa). Residue Asp110 is part of the active site. N-linked (GlcNAc...) asparagine glycosylation occurs at Asn282. Asp292 is a catalytic residue. N-linked (GlcNAc...) asparagine glycosylation is present at Asn329.

It belongs to the peptidase A1 family.

It localises to the secreted. In terms of biological role, probable aspartic-type endopeptidase which contributes to virulence. The sequence is that of Probable aspartic-type endopeptidase TRV_05382 from Trichophyton verrucosum (strain HKI 0517).